The primary structure comprises 632 residues: PTS system mannitol-specific EIICBA component (632 aa).

The region spanning 12–341 (FGRFLSNMIM…ILLKYDFNTI (330 aa)) is the PTS EIIC type-2 domain. Transmembrane regions (helical) follow at residues 24–45 (ISIF…WQPN), 50–70 (QLIS…TGGS), 134–155 (SLAI…PFIE), 165–185 (IQII…EPAK), 273–292 (LILG…GGLI), and 313–334 (FSNI…SILL). The PTS EIIB type-2 domain occupies 374 to 469 (KTIIVACDAG…KLVENMVFLY (96 aa)). Catalysis depends on Cys380, which acts as the Phosphocysteine intermediate; for EIIB activity. Cys380 is subject to Phosphocysteine; by EIIA. Residues 488–630 (FQLNEENIIL…KEALSLLTME (143 aa)) form the PTS EIIA type-2 domain. Catalysis depends on His548, which acts as the Tele-phosphohistidine intermediate; for EIIA activity. Phosphohistidine; by HPr is present on His548.

In terms of assembly, homodimer. An intramolecular phosphotransfer takes places between His-548 and Cys-380.

The protein resides in the cell inner membrane. The catalysed reaction is D-mannitol(out) + N(pros)-phospho-L-histidyl-[protein] = D-mannitol 1-phosphate(in) + L-histidyl-[protein]. Functionally, the phosphoenolpyruvate-dependent sugar phosphotransferase system (sugar PTS), a major carbohydrate active transport system, catalyzes the phosphorylation of incoming sugar substrates concomitantly with their translocation across the cell membrane. This system is involved in D-mannitol transport. This is PTS system mannitol-specific EIICBA component (mtlA) from Buchnera aphidicola subsp. Acyrthosiphon pisum (strain APS) (Acyrthosiphon pisum symbiotic bacterium).